The following is a 388-amino-acid chain: uncharacterized protein (388 aa).

The protein belongs to the glycosyltransferase 28 family.

This is an uncharacterized protein from Methanosarcina acetivorans (strain ATCC 35395 / DSM 2834 / JCM 12185 / C2A).